The sequence spans 323 residues: ATP synthase gamma chain (323 aa).

Belongs to the ATPase gamma chain family. In terms of assembly, F-type ATPases have 2 components, CF(1) - the catalytic core - and CF(0) - the membrane proton channel. CF(1) has five subunits: alpha(3), beta(3), gamma(1), delta(1), epsilon(1). CF(0) has three main subunits: a, b and c.

The protein localises to the cell inner membrane. Functionally, produces ATP from ADP in the presence of a proton gradient across the membrane. The gamma chain is believed to be important in regulating ATPase activity and the flow of protons through the CF(0) complex. The protein is ATP synthase gamma chain of Rickettsia africae (strain ESF-5).